The sequence spans 207 residues: Phosphatidylinositol phosphate synthase (207 aa).

A run of 2 helical transmembrane segments spans residues Leu21–Ile44 and Trp50–Leu67. A CDP-1,2-diacyl-sn-glycerol is bound at residue Asp28 to Thr31. Residues Asp65 and Asp68 each contribute to the Mg(2+) site. Positions 69, 73, and 79 each coordinate a CDP-1,2-diacyl-sn-glycerol. Residues Asp86 and Asp90 each contribute to the Mg(2+) site. Transmembrane regions (helical) follow at residues Thr88–Ala106, Val112–Val131, Arg152–Ala170, and Val176–Val195. The active-site Proton acceptor is the Asp90.

Belongs to the CDP-alcohol phosphatidyltransferase class-I family. Homodimer. It depends on Mg(2+) as a cofactor.

The protein resides in the cell membrane. It catalyses the reaction a CDP-1,2-diacyl-sn-glycerol + 1D-myo-inositol 3-phosphate = a 1,2-diacyl-sn-glycero-3-phospho-(1D-myo-inositol-3-phosphate) + CMP + H(+). It carries out the reaction 1,2-di-(9Z-octadecenoyl)-sn-glycero-3-cytidine-5'-diphosphate + 1D-myo-inositol 3-phosphate = 1,2-di-(9Z-octadecenoyl)-sn-glycero-3-phospho-(1D-myo-inositol-3-phosphate) + CMP + H(+). The protein operates within phospholipid metabolism; phosphatidylinositol phosphate biosynthesis. Functionally, catalyzes the conjugation of the 1'-hydroxyl group of D-myo-inositol-3-phosphate (also named L-myo-inositol-1-phosphate) with a lipid tail of cytidine diphosphate diacylglycerol (CDP-DAG), forming phosphatidylinositol phosphate (PIP) and CMP. PIP is a precursor of phosphatidylinositol (PI) which is an essential lipid required for cell wall formation. In Cutibacterium acnes (strain DSM 16379 / KPA171202) (Propionibacterium acnes), this protein is Phosphatidylinositol phosphate synthase.